The following is an 80-amino-acid chain: Metallothionein-like protein 2B (80 aa).

Belongs to the metallothionein superfamily. Type 15 family. In terms of tissue distribution, highly expressed in stems. Expressed in leaves and rachis.

Its function is as follows. Metallothioneins have a high content of cysteine residues that bind various heavy metals. In Oryza sativa subsp. japonica (Rice), this protein is Metallothionein-like protein 2B (MT2B).